Consider the following 288-residue polypeptide: Probable aquaporin PIP2-2 (288 aa).

The tract at residues 1–21 (MAKDIEASAPEGGEFSAKDYT) is disordered. Transmembrane regions (helical) follow at residues 42 to 62 (AVIAEFIATLLFLYITVATVI) and 81 to 101 (GVGILGIAWAFGGMIFILVYC). The NPA 1 signature appears at 111–113 (NPA). The next 3 helical transmembrane spans lie at 130 to 150 (VLYIIAQCLGAICGVGLVKGF), 172 to 192 (GTGLGAEIIGTFVLVYTVFSA), and 204 to 224 (IPVLAPLPIGFAVFMVHLATI). Residues 232–234 (NPA) carry the NPA 2 motif. The chain crosses the membrane as a helical span at residues 254-274 (IFWVGPLIGAAIAAAYHQYVL).

Belongs to the MIP/aquaporin (TC 1.A.8) family. PIP (TC 1.A.8.11) subfamily. As to expression, expressed in roots, leaves and anthers.

It localises to the cell membrane. Aquaporins facilitate the transport of water and small neutral solutes across cell membranes. This is Probable aquaporin PIP2-2 (PIP2-2) from Oryza sativa subsp. japonica (Rice).